Consider the following 130-residue polypeptide: Small ribosomal subunit protein uS11 (130 aa).

This sequence belongs to the universal ribosomal protein uS11 family. As to quaternary structure, part of the 30S ribosomal subunit. Interacts with proteins S7 and S18. Binds to IF-3.

Functionally, located on the platform of the 30S subunit, it bridges several disparate RNA helices of the 16S rRNA. Forms part of the Shine-Dalgarno cleft in the 70S ribosome. The sequence is that of Small ribosomal subunit protein uS11 from Prochlorococcus marinus (strain MIT 9211).